A 585-amino-acid chain; its full sequence is Probable multidrug resistance ABC transporter ATP-binding/permease protein YheI (585 aa).

In terms of domain architecture, ABC transmembrane type-1 spans 19 to 304; the sequence is YTIAIVLLLA…IGELINVMQR (286 aa). A run of 6 helical transmembrane segments spans residues 21-41, 57-77, 127-147, 149-169, 249-269, and 279-299; these read IAIVLLLAVNVIEMFPPKLLG, LLFYIGIFFVLTAAVYIMSYF, AVSLTTGFGILTLVDSTMFMM, IFLTMGFLISWKLTFAAIIPL, VKLLVGASYLIGLGYGAFLVF, and VSFNVYLGMMIWPMFAIGELI. Positions 337 to 572 constitute an ABC transporter domain; the sequence is IVFSHVSFTY…NGWYREQYER (236 aa). 371–378 provides a ligand contact to ATP; it reads GKTGSGKT.

The protein belongs to the ABC transporter superfamily. Heterodimer composed of YheH and YheI.

Its subcellular location is the cell membrane. Inhibited by ortho-vanadate. Functionally, involved in the transport of four structurally unrelated drugs, including doxorubicin and mitoxantrone. Transmembrane domains (TMD) form a pore in the membrane and the ATP-binding domain (NBD) is responsible for energy generation. This Bacillus subtilis (strain 168) protein is Probable multidrug resistance ABC transporter ATP-binding/permease protein YheI (yheI).